The chain runs to 272 residues: tRNA pseudouridine synthase A (272 aa).

Residue aspartate 62 is the Nucleophile of the active site. Substrate is bound at residue tyrosine 120.

Belongs to the tRNA pseudouridine synthase TruA family. As to quaternary structure, homodimer.

The catalysed reaction is uridine(38/39/40) in tRNA = pseudouridine(38/39/40) in tRNA. Its function is as follows. Formation of pseudouridine at positions 38, 39 and 40 in the anticodon stem and loop of transfer RNAs. The polypeptide is tRNA pseudouridine synthase A (Nitrosomonas europaea (strain ATCC 19718 / CIP 103999 / KCTC 2705 / NBRC 14298)).